Consider the following 72-residue polypeptide: Translation initiation factor IF-1 (72 aa).

Positions 1–72 (MAKDDVIEIQ…TKGRITYRFK (72 aa)) constitute an S1-like domain.

This sequence belongs to the IF-1 family. Component of the 30S ribosomal translation pre-initiation complex which assembles on the 30S ribosome in the order IF-2 and IF-3, IF-1 and N-formylmethionyl-tRNA(fMet); mRNA recruitment can occur at any time during PIC assembly.

It is found in the cytoplasm. Its function is as follows. One of the essential components for the initiation of protein synthesis. Stabilizes the binding of IF-2 and IF-3 on the 30S subunit to which N-formylmethionyl-tRNA(fMet) subsequently binds. Helps modulate mRNA selection, yielding the 30S pre-initiation complex (PIC). Upon addition of the 50S ribosomal subunit IF-1, IF-2 and IF-3 are released leaving the mature 70S translation initiation complex. In Lacticaseibacillus paracasei (strain ATCC 334 / BCRC 17002 / CCUG 31169 / CIP 107868 / KCTC 3260 / NRRL B-441) (Lactobacillus paracasei), this protein is Translation initiation factor IF-1.